The chain runs to 763 residues: Phosphoglycerol transferase I (763 aa).

4 helical membrane passes run 1–21, 26–46, 77–97, and 108–128; these read MSELLSIALFLASVLIYAWKA, WWFAAILAVLGLFVVLNITLY, ILPGAGIVLALAAVFSALGWV, and FGYSLLALLLALGSVDASPAF.

This sequence belongs to the OpgB family.

The protein localises to the cell inner membrane. The enzyme catalyses a phosphatidylglycerol + a membrane-derived-oligosaccharide D-glucose = a 1,2-diacyl-sn-glycerol + a membrane-derived-oligosaccharide 6-(glycerophospho)-D-glucose.. The protein operates within glycan metabolism; osmoregulated periplasmic glucan (OPG) biosynthesis. Its function is as follows. Transfers a phosphoglycerol residue from phosphatidylglycerol to the membrane-bound nascent glucan backbones. The sequence is that of Phosphoglycerol transferase I from Citrobacter koseri (strain ATCC BAA-895 / CDC 4225-83 / SGSC4696).